The sequence spans 594 residues: Probable glucose transporter rco-3 (594 aa).

Residues 1-13 (MAIFAMGWQKPDN) are Cytoplasmic-facing. A helical membrane pass occupies residues 14-34 (VAGSSAPAIMVGLFVATGGLL). Residues 35–73 (LGYDTGTINGILAMKSFKDHFSTGYIDGNGQPGIYPKES) lie on the Extracellular side of the membrane. Residues 74–94 (ALIVAMLSAGTAIGALLAAPL) form a helical membrane-spanning segment. Residues 95 to 103 (GDHYGRRRS) are Cytoplasmic-facing. Residues 104 to 124 (LIGAIGIFVIGAILQVCAYNI) form a helical membrane-spanning segment. Residue Asp125 is a topological domain, extracellular. A helical transmembrane segment spans residues 126-146 (LLVAGRTVAGVGIGIVSVLVP). At 147-159 (LYQSEMAPKWIRG) the chain is on the cytoplasmic side. The chain crosses the membrane as a helical span at residues 160–180 (TLVCTYQLSITMGLLAAAVVN). Residues 181–193 (ILTYKLKTAAAYR) are Extracellular-facing. A helical transmembrane segment spans residues 194-214 (VPIGLQLTWACVLALGLTVLP). Over 215–293 (ETPRYLIKRG…TGCCLQMLQQ (79 aa)) the chain is Cytoplasmic. The helical transmembrane segment at 294–314 (LTGVNFIMYYGTTFFNNAGVG) threads the bilayer. Residues 315-318 (NPFK) lie on the Extracellular side of the membrane. Residues 319–339 (ISLIMQVINTASTIPGLFVVE) traverse the membrane as a helical segment. Residues 340 to 345 (SWGRRR) are Cytoplasmic-facing. A helical transmembrane segment spans residues 346-366 (LLMVGAIGMAICQLLIAAFAT). The Extracellular portion of the chain corresponds to 367-378 (ASGSNNLSAQNK). An N-linked (GlcNAc...) asparagine glycan is attached at Asn372. A helical transmembrane segment spans residues 379 to 403 (VLITFVAIYIFFFAASWGPVVWVVT). Residues 404 to 415 (SEIYPLKVRAKS) lie on the Cytoplasmic side of the membrane. The chain crosses the membrane as a helical span at residues 416 to 436 (MSITTASNWFLNFGIAYGTPY). At 437–454 (MQTNSAASDESSIDLGSK) the chain is on the extracellular side. A helical transmembrane segment spans residues 455 to 475 (VFFVWGAFCIVAVGFVWCMVY). The Cytoplasmic portion of the chain corresponds to 476 to 594 (ETSKISLEQI…ASLGNIDLSY (119 aa)). A disordered region spans residues 512–594 (DLGFSDGGIP…ASLGNIDLSY (83 aa)). The segment covering 524–576 (QQLQQQPQQPQQQQQQHHQQQQHQLQVDLQQSQSRTSNSSTSQTDTGGSNNTG) has biased composition (low complexity).

This sequence belongs to the major facilitator superfamily. Sugar transporter (TC 2.A.1.1) family.

The protein localises to the membrane. Probable glucose transporter. Involved in sugar transport, carbon catabolite repression, and initiation of conidiophore development. In Neurospora crassa (strain ATCC 24698 / 74-OR23-1A / CBS 708.71 / DSM 1257 / FGSC 987), this protein is Probable glucose transporter rco-3 (rco-3).